We begin with the raw amino-acid sequence, 374 residues long: Queuine tRNA-ribosyltransferase (374 aa).

D89 (proton acceptor) is an active-site residue. Substrate-binding positions include 89-93 (DSGGF), D143, Q187, and G214. Residues 245–251 (GVGKPED) form an RNA binding region. The active-site Nucleophile is the D264. Positions 269–273 (TRNAR) are RNA binding; important for wobble base 34 recognition. Positions 302, 304, 307, and 333 each coordinate Zn(2+).

Belongs to the queuine tRNA-ribosyltransferase family. As to quaternary structure, homodimer. Within each dimer, one monomer is responsible for RNA recognition and catalysis, while the other monomer binds to the replacement base PreQ1. It depends on Zn(2+) as a cofactor.

The enzyme catalyses 7-aminomethyl-7-carbaguanine + guanosine(34) in tRNA = 7-aminomethyl-7-carbaguanosine(34) in tRNA + guanine. It participates in tRNA modification; tRNA-queuosine biosynthesis. In terms of biological role, catalyzes the base-exchange of a guanine (G) residue with the queuine precursor 7-aminomethyl-7-deazaguanine (PreQ1) at position 34 (anticodon wobble position) in tRNAs with GU(N) anticodons (tRNA-Asp, -Asn, -His and -Tyr). Catalysis occurs through a double-displacement mechanism. The nucleophile active site attacks the C1' of nucleotide 34 to detach the guanine base from the RNA, forming a covalent enzyme-RNA intermediate. The proton acceptor active site deprotonates the incoming PreQ1, allowing a nucleophilic attack on the C1' of the ribose to form the product. After dissociation, two additional enzymatic reactions on the tRNA convert PreQ1 to queuine (Q), resulting in the hypermodified nucleoside queuosine (7-(((4,5-cis-dihydroxy-2-cyclopenten-1-yl)amino)methyl)-7-deazaguanosine). This is Queuine tRNA-ribosyltransferase from Shewanella sp. (strain W3-18-1).